The primary structure comprises 214 residues: MSDTQHSCVIIGIAGASASGKSLIAQTIYEELVAELGAGQIGVITEDCYYRDQTHLTMEERVKTNYDHPNALDHDLLVQHLSQLVKGDAVNIPQYSYTEHTRMNDVTPFAPRRVIILEGILLLTDSRLRDLMDASIFMDTPLDICLLRRLVRDVQERGRTMDSVLKQYQKTVRPMFLQFIEPSKQYADVIVPRGGKNRIAIDMLKARILHMLIG.

15 to 22 (GASASGKS) is a binding site for ATP.

The protein belongs to the uridine kinase family.

It localises to the cytoplasm. The catalysed reaction is uridine + ATP = UMP + ADP + H(+). It carries out the reaction cytidine + ATP = CMP + ADP + H(+). The protein operates within pyrimidine metabolism; CTP biosynthesis via salvage pathway; CTP from cytidine: step 1/3. It functions in the pathway pyrimidine metabolism; UMP biosynthesis via salvage pathway; UMP from uridine: step 1/1. This chain is Uridine kinase, found in Aeromonas salmonicida (strain A449).